The sequence spans 201 residues: Protease (201 aa).

Active-site residues include His-55, Asp-72, and Cys-122.

It belongs to the peptidase C5 family. Interacts with protease cofactor pVI-C; this interaction is necessary for protease activation.

It is found in the virion. The protein resides in the host nucleus. The enzyme catalyses Cleaves proteins of the adenovirus and its host cell at two consensus sites: -Yaa-Xaa-Gly-Gly-|-Xaa- and -Yaa-Xaa-Gly-Xaa-|-Gly- (in which Yaa is Met, Ile or Leu, and Xaa is any amino acid).. Requires DNA and protease cofactor for maximal activation. Inside nascent virions, becomes partially activated by binding to the viral DNA, allowing it to cleave the cofactor that binds to the protease and fully activates it. Actin, like the viral protease cofactor, seems to act as a cofactor in the cleavage of cytokeratin 18 and of actin itself. Functionally, cleaves viral precursor proteins (pTP, pIIIa, pVI, pVII, pVIII, and pX) inside newly assembled particles giving rise to mature virions. Protease complexed to its cofactor slides along the viral DNA to specifically locate and cleave the viral precursors. Mature virions have a weakened organization compared to the unmature virions, thereby facilitating subsequent uncoating. Without maturation, the particle lacks infectivity and is unable to uncoat. Late in adenovirus infection, in the cytoplasm, may participate in the cytoskeleton destruction. Cleaves host cell cytoskeletal keratins K7 and K18. In Pantherophis guttatus (Corn snake), this protein is Protease.